We begin with the raw amino-acid sequence, 387 residues long: Alpha-2B adrenergic receptor (387 aa).

The chain crosses the membrane as a helical span at residues 1-25 (AIAAVITFLILFTIFGNALVILAVL). Topologically, residues 26–36 (TSRSLRAPQNL) are cytoplasmic. The chain crosses the membrane as a helical span at residues 37–62 (FLVSLAAADILVATLIIPFSLANELL). Residues 63-72 (GYWYFRHTWC) lie on the Extracellular side of the membrane. A disulfide bridge links cysteine 72 with cysteine 151. Residues 73–95 (XVYLALDVLFCTSSIVHLCAISL) form a helical membrane-spanning segment. The Cytoplasmic portion of the chain corresponds to 96–117 (DRYWAVSRALEYNSKRTPRRIK). A helical membrane pass occupies residues 118 to 140 (CIILTVWLIAAAISLPPLIYKGD). Over 141-156 (QDPQPRGRPQCKLNQE) the chain is Extracellular. Residues 157 to 180 (AWYILSSSIGSFFVPCLIMILVYL) form a helical membrane-spanning segment. The Cytoplasmic segment spans residues 181–351 (RIYLIAKRSS…LTREKRFTFV (171 aa)). The disordered stretch occupies residues 193–303 (RKPRAKGXPR…VPASPALACS (111 aa)). Positions 279–290 (PEEEAEEEEECG) are enriched in acidic residues. The helical transmembrane segment at 352–375 (LAVVIGVFVLCWFPFFFSYSLGAI) threads the bilayer. Over 376–384 (CPQHCKVPH) the chain is Extracellular. A helical transmembrane segment spans residues 385–387 (GLF).

Belongs to the G-protein coupled receptor 1 family. Adrenergic receptor subfamily. ADRA2B sub-subfamily. As to quaternary structure, interacts with RAB26. Interacts with PPP1R9B. Interacts with GGA1, GGA2 and GGA3.

It is found in the cell membrane. Alpha-2 adrenergic receptors mediate the catecholamine-induced inhibition of adenylate cyclase through the action of G proteins. This Macroscelides proboscideus (Short-eared elephant shrew) protein is Alpha-2B adrenergic receptor (ADRA2B).